The primary structure comprises 248 residues: PF03932 family protein CutC (248 aa).

This sequence belongs to the CutC family. As to quaternary structure, homodimer.

The protein resides in the cytoplasm. The polypeptide is PF03932 family protein CutC (Escherichia coli O9:H4 (strain HS)).